The primary structure comprises 151 residues: Small ribosomal subunit protein uS13 (151 aa).

Belongs to the universal ribosomal protein uS13 family. In terms of assembly, part of the 30S ribosomal subunit. Forms a loose heterodimer with protein S19. Forms two bridges to the 50S subunit in the 70S ribosome.

Located at the top of the head of the 30S subunit, it contacts several helices of the 16S rRNA. In the 70S ribosome it contacts the 23S rRNA (bridge B1a) and protein L5 of the 50S subunit (bridge B1b), connecting the 2 subunits; these bridges are implicated in subunit movement. This is Small ribosomal subunit protein uS13 from Methanospirillum hungatei JF-1 (strain ATCC 27890 / DSM 864 / NBRC 100397 / JF-1).